The following is a 146-amino-acid chain: Basic phospholipase A2 beta-bungarotoxin A2 chain (146 aa).

An N-terminal signal peptide occupies residues 1–19 (MNPAHLLVLSAVCVSLLGA). Residues 20–27 (SNIPPQSL) constitute a propeptide that is removed on maturation. Disulfide bonds link Cys54–Cys145, Cys56–Cys72, Cys71–Cys126, Cys78–Cys119, Cys87–Cys112, and Cys105–Cys117. Positions 55, 57, and 59 each coordinate Ca(2+). His75 is an active-site residue. Asp76 lines the Ca(2+) pocket. Asp120 is an active-site residue.

Belongs to the phospholipase A2 family. Group I subfamily. D49 sub-subfamily. In terms of assembly, heterodimer; disulfide-linked. The A chain has phospholipase A2 activity and the B chain shows homology with the basic protease inhibitors. The cofactor is Ca(2+). In terms of tissue distribution, expressed by the venom gland.

It is found in the secreted. It catalyses the reaction a 1,2-diacyl-sn-glycero-3-phosphocholine + H2O = a 1-acyl-sn-glycero-3-phosphocholine + a fatty acid + H(+). In terms of biological role, snake venom phospholipase A2 (PLA2) that inhibits neuromuscular transmission by blocking acetylcholine release from the nerve termini. PLA2 catalyzes the calcium-dependent hydrolysis of the 2-acyl groups in 3-sn-phosphoglycerides. The chain is Basic phospholipase A2 beta-bungarotoxin A2 chain from Bungarus flaviceps flaviceps (Red-headed krait).